Here is a 428-residue protein sequence, read N- to C-terminus: Anaerobic glycerol-3-phosphate dehydrogenase subunit B (428 aa).

This sequence belongs to the anaerobic G-3-P dehydrogenase subunit B family. In terms of assembly, composed of a catalytic GlpA/B dimer and of membrane bound GlpC. FMN is required as a cofactor.

The catalysed reaction is a quinone + sn-glycerol 3-phosphate = dihydroxyacetone phosphate + a quinol. The protein operates within polyol metabolism; glycerol degradation via glycerol kinase pathway; glycerone phosphate from sn-glycerol 3-phosphate (anaerobic route): step 1/1. In terms of biological role, conversion of glycerol 3-phosphate to dihydroxyacetone. Uses fumarate or nitrate as electron acceptor. This Pasteurella multocida (strain Pm70) protein is Anaerobic glycerol-3-phosphate dehydrogenase subunit B.